The following is a 237-amino-acid chain: UPF0173 metal-dependent hydrolase BOV_A0561 (237 aa).

This sequence belongs to the UPF0173 family.

The polypeptide is UPF0173 metal-dependent hydrolase BOV_A0561 (Brucella ovis (strain ATCC 25840 / 63/290 / NCTC 10512)).